Here is a 451-residue protein sequence, read N- to C-terminus: uncharacterized protein (451 aa).

Residues 415 to 435 are disordered; the sequence is AHGDTEWLPPPHLDHGQPRVN.

Belongs to the Rv1128c/1148c/1588c/1702c/1945/3466 family.

This is an uncharacterized protein from Mycobacterium tuberculosis (strain ATCC 25618 / H37Rv).